A 98-amino-acid chain; its full sequence is uncharacterized protein (98 aa).

This is an uncharacterized protein from Schizosaccharomyces pombe (strain 972 / ATCC 24843) (Fission yeast).